The sequence spans 187 residues: UPF0232 protein MUL_0004 (187 aa).

A compositionally biased stretch (gly residues) spans 1-12; the sequence is MNGDGEQPGPGD. Disordered regions lie at residues 1-77 and 166-187; these read MNGD…QPLG and ASPSWRKGPRHIAGRGPRDTYG. A compositionally biased stretch (basic and acidic residues) spans 14-30; sequence AARDELPSMDLVRRTLA. A compositionally biased stretch (low complexity) spans 31 to 55; that stretch reads EARAAARARGQDPGRGFAAGPAPRR.

This sequence belongs to the UPF0232 family.

The sequence is that of UPF0232 protein MUL_0004 from Mycobacterium ulcerans (strain Agy99).